The primary structure comprises 268 residues: Small ribosomal subunit protein uS3 (268 aa).

Residues 38-106 (IRKLLATGME…QVQLNILEVK (69 aa)) enclose the KH type-2 domain. Residues 218-268 (VAAPAGDRPRRERPSRPRRSGATGTTATSTEAGRAATATADAPATTEQKEG) are disordered. Low complexity predominate over residues 237–268 (SGATGTTATSTEAGRAATATADAPATTEQKEG).

The protein belongs to the universal ribosomal protein uS3 family. As to quaternary structure, part of the 30S ribosomal subunit. Forms a tight complex with proteins S10 and S14.

Binds the lower part of the 30S subunit head. Binds mRNA in the 70S ribosome, positioning it for translation. The sequence is that of Small ribosomal subunit protein uS3 from Rhodococcus jostii (strain RHA1).